A 48-amino-acid chain; its full sequence is Probable antitoxin PhoAT (48 aa).

Belongs to the PhoAT antitoxin family. In terms of assembly, interacts with toxin PhoH2.

Functionally, probable antitoxin component of a type II toxin-antitoxin (TA) system. The probable cognate antitoxin is PhoAT; the toxin gene can be expressed in the absence of the antitoxin gene in M.smegmatis strain mc(2)155. This Mycolicibacterium smegmatis (strain ATCC 700084 / mc(2)155) (Mycobacterium smegmatis) protein is Probable antitoxin PhoAT.